The chain runs to 240 residues: uncharacterized protein (240 aa).

The Cytoplasmic segment spans residues 1-85 (MSGFIKSTLL…LCGCCCWTNT (85 aa)). The helical transmembrane segment at 86–106 (IGWAPLLALLPVIGPLLMYWV) threads the bilayer. The Extracellular segment spans residues 107–131 (HDKLIELADDRYKLPAEIKVKMHGN). The helical transmembrane segment at 132 to 152 (IVIDLLISLVPILGSVFAWLH) threads the bilayer. The Cytoplasmic portion of the chain corresponds to 153–240 (ACSTRNAAIV…TNGRPQRGYR (88 aa)). Residues 181–240 (QKEENEKHSNANTAPPVVGGNKNVNGNRNNSKMYNRPPVTAPPAPAYTRSTNGRPQRGYR) are disordered. The span at 197-210 (VVGGNKNVNGNRNN) shows a compositional bias: low complexity.

The protein resides in the membrane. This is an uncharacterized protein from Saccharomyces cerevisiae (strain ATCC 204508 / S288c) (Baker's yeast).